The following is a 51-amino-acid chain: Large ribosomal subunit protein eL39 (51 aa).

The protein belongs to the eukaryotic ribosomal protein eL39 family.

The sequence is that of Large ribosomal subunit protein eL39 from Picrophilus torridus (strain ATCC 700027 / DSM 9790 / JCM 10055 / NBRC 100828 / KAW 2/3).